A 261-amino-acid polypeptide reads, in one-letter code: Maspardin (261 aa).

The AB hydrolase-1 domain occupies 87–159 (FCDGFRKLLD…NSFWLMPAFM (73 aa)). S257 bears the Phosphoserine mark.

Belongs to the AB hydrolase superfamily. As to quaternary structure, interacts with CD4. Interacts with ALDH16A1.

The protein localises to the cytoplasm. In terms of biological role, may play a role as a negative regulatory factor in CD4-dependent T-cell activation. This is Maspardin (Spg21) from Rattus norvegicus (Rat).